The primary structure comprises 147 residues: Succinate dehydrogenase assembly factor 2, mitochondrial (147 aa).

The protein belongs to the SDHAF2 family. As to quaternary structure, interacts with the flavoprotein subunit within the SDH catalytic dimer.

The protein localises to the mitochondrion matrix. Its function is as follows. Plays an essential role in the assembly of succinate dehydrogenase (SDH), an enzyme complex (also referred to as respiratory complex II) that is a component of both the tricarboxylic acid (TCA) cycle and the mitochondrial electron transport chain, and which couples the oxidation of succinate to fumarate with the reduction of ubiquinone (coenzyme Q) to ubiquinol. Required for flavinylation (covalent attachment of FAD) of the flavoprotein subunit of the SDH catalytic dimer. This is Succinate dehydrogenase assembly factor 2, mitochondrial from Drosophila grimshawi (Hawaiian fruit fly).